Reading from the N-terminus, the 450-residue chain is Bifunctional apoptosis regulator (450 aa).

Residues 1–20 (MEEPQKSYVNTMDLERDEPL) form a disordered region. Over 1–140 (MEEPQKSYVN…PNTGRANQQM (140 aa)) the chain is Cytoplasmic. The RING-type zinc finger occupies 34-74 (CHCCYDILVNPTTLNCGHSFCRHCLALWWASSKKTECPECR). The chain crosses the membrane as a helical span at residues 141–161 (GGGFFSGVLTALTGVAVVLLV). The Lumenal segment spans residues 162–331 (YHWSSRESEH…KEPTWKQWRE (170 aa)). One can recognise an SAM domain in the interval 182 to 249 (WTAEEVVLWL…LMELERVKAL (68 aa)). N232 is a glycosylation site (N-linked (GlcNAc...) asparagine). The helical transmembrane segment at 332–352 (FLVKYSFLPYQLIAEFAWDWL) threads the bilayer. The Cytoplasmic segment spans residues 353–360 (EVHYWTSR). The chain crosses the membrane as a helical span at residues 361–381 (FLIINAMLLSVLELFSFWRIW). Residues 382-404 (SRSELKTVPQRMWSHFWKVSTQG) are Lumenal-facing. A helical transmembrane segment spans residues 405 to 425 (LFVAMFWPLIPQFVCNCLFYW). Residues 426–450 (ALYFNPIINIDLVVKELRRLETQVL) lie on the Cytoplasmic side of the membrane.

Interacts with CASP8, BCL2 and BCL2L1 through SAM domain and also with HIP1, IFT57, ESRRBL1 and BCAP31. Interacts with NGFR; this interaction inhibits NF-kappa-B and JNK-related signaling pathways. Post-translationally, mediates RING-dependent self-ubiquitination leading to proteasomal degradation. Expressed highly in brain, moderately in small intestine, weakly in testes and only faintly in liver and skeletal muscle. Not expressed in heart, kidney, lung and spleen.

The protein localises to the endoplasmic reticulum membrane. The catalysed reaction is S-ubiquitinyl-[E2 ubiquitin-conjugating enzyme]-L-cysteine + [acceptor protein]-L-lysine = [E2 ubiquitin-conjugating enzyme]-L-cysteine + N(6)-ubiquitinyl-[acceptor protein]-L-lysine.. Membrane-bound E3 ubiquitin ligase that plays a role in several processes including apoptosis regulation or reticulum endoplasmic stress. Has anti-apoptotic activity, both for apoptosis triggered via death-receptors and via mitochondrial factors. Contributes to the dynamic control of IRE1/ERN1 signaling during ER stress by inducing BAX inhibitor 1/TMBIM6 proteasomal degradation. Promotes the activation of TGF-beta signaling by mediating the 'Lys-63'-linked ubiquitination of TGFBR1 which is critical to activate the pathway. Together with NGFR, negatively regulates NF-kappa-B and JNK-related signaling pathways. Promotes the proteasome-mediated degradation of PNPLA3, a protein involveld in lipid metabolism. In Homo sapiens (Human), this protein is Bifunctional apoptosis regulator (BFAR).